The chain runs to 346 residues: Cyclin-dependent kinase 7 (346 aa).

The residue at position 2 (Ala2) is an N-acetylalanine. Position 7 is a phosphoserine (Ser7). Positions 12 to 295 constitute a Protein kinase domain; that stretch reads YEKLDFLGEG…ASQALKTKYF (284 aa). ATP-binding positions include 18-26 and Lys41; that span reads LGEGQFATV. Residue Asp137 is the Proton acceptor of the active site. The residue at position 164 (Ser164) is a Phosphoserine; by CDK1 and CDK2. Thr170 carries the post-translational modification Phosphothreonine; by CDK2.

The protein belongs to the protein kinase superfamily. CMGC Ser/Thr protein kinase family. CDC2/CDKX subfamily. Associates primarily with cyclin-H (CCNH) and MAT1 to form the CAK complex. CAK can further associate with the core-TFIIH to form the TFIIH basal transcription factor; this complex is sensitive to UV light. The CAK complex binds to p53/TP53 in response to DNA damage. Interacts with CDK2, SF1/NR5A1, PUF60 and PRKCI. Interacts with HINT1. Phosphorylation of Ser-164 during mitosis inactivates the enzyme. Phosphorylation of Thr-170 is required for activity. Phosphorylated at Ser-164 and Thr-170 by CDK2.

Its subcellular location is the nucleus. It localises to the cytoplasm. The protein resides in the perinuclear region. The enzyme catalyses L-seryl-[protein] + ATP = O-phospho-L-seryl-[protein] + ADP + H(+). The catalysed reaction is L-threonyl-[protein] + ATP = O-phospho-L-threonyl-[protein] + ADP + H(+). It carries out the reaction [DNA-directed RNA polymerase] + ATP = phospho-[DNA-directed RNA polymerase] + ADP + H(+). Its activity is regulated as follows. Phosphorylation at Thr-170 is required for enzymatic activity. The association of p53/TP53 to the CAK complex in response to DNA damage reduces kinase activity toward CDK2 and RNA polymerase II repetitive C-terminal domain (CTD), thus stopping cell cycle progression. In terms of biological role, serine/threonine kinase involved in cell cycle control and in RNA polymerase II-mediated RNA transcription. Cyclin-dependent kinases (CDKs) are activated by the binding to a cyclin and mediate the progression through the cell cycle. Each different complex controls a specific transition between 2 subsequent phases in the cell cycle. Required for both activation and complex formation of CDK1/cyclin-B during G2-M transition, and for activation of CDK2/cyclins during G1-S transition (but not complex formation). CDK7 is the catalytic subunit of the CDK-activating kinase (CAK) complex. Phosphorylates SPT5/SUPT5H, SF1/NR5A1, POLR2A, p53/TP53, CDK1, CDK2, CDK4, CDK6 and CDK11B/CDK11. Initiates transcription by RNA polymerase II by mediating phosphorylation of POLR2A at 'Ser-5' of the repetitive C-terminal domain (CTD) when POLR2A is in complex with DNA, promoting dissociation from DNA and initiation. CAK activates the cyclin-associated kinases CDK1, CDK2, CDK4 and CDK6 by threonine phosphorylation, thus regulating cell cycle progression. CAK complexed to the core-TFIIH basal transcription factor activates RNA polymerase II by serine phosphorylation of the CTD of POLR2A, allowing its escape from the promoter and elongation of the transcripts. Its expression and activity are constant throughout the cell cycle. Upon DNA damage, triggers p53/TP53 activation by phosphorylation, but is inactivated in turn by p53/TP53; this feedback loop may lead to an arrest of the cell cycle and of the transcription, helping in cell recovery, or to apoptosis. Required for DNA-bound peptides-mediated transcription and cellular growth inhibition. The sequence is that of Cyclin-dependent kinase 7 (Cdk7) from Mus musculus (Mouse).